A 652-amino-acid chain; its full sequence is Transmembrane 9 superfamily member 12 (652 aa).

The signal sequence occupies residues 1–20 (MFGVYRVFVLLVFVSQLCNG). Residues 21–286 (FYLPGSYMHT…LKMEGARVHW (266 aa)) are Lumenal-facing. A helical membrane pass occupies residues 287–307 (FSILNSLMVIFFLAGIVFVIF). The Cytoplasmic segment spans residues 308–362 (LRTVRRDLTKYEELDKEAQAQMNEELSGWKLVVGDVFREPEMSKLLCIMVGDGVR). The chain crosses the membrane as a helical span at residues 363–383 (ITGMAVVTIVFAALGFMSPAS). Residues 384–386 (RGM) are Lumenal-facing. The helical transmembrane segment at 387 to 407 (LLTGMIILYLFLGIVAGYAGV) threads the bilayer. Residues 408–426 (RLWRTVKGTSEGWRSLSWS) lie on the Cytoplasmic side of the membrane. Residues 427-447 (IACFFPGIAFVILTVLNFLLW) form a helical membrane-spanning segment. Residues 448–460 (SSNSTGAIPISLY) lie on the Lumenal side of the membrane. A helical membrane pass occupies residues 461-481 (FELLALWFCISVPLTLFGGFL). Residues 482 to 510 (GTRAEAIQFPVRTNQIPREIPERKYPSWL) are Cytoplasmic-facing. Residues 511–531 (LVLGAGTLPFGTLFIELFFIF) traverse the membrane as a helical segment. Residues 532–541 (SSIWLGRFYY) lie on the Lumenal side of the membrane. A helical membrane pass occupies residues 542–562 (VFGFLLIVLLLLVVVCAEVSV). Topologically, residues 563-580 (VLTYMHLCVEDWRWWWKA) are cytoplasmic. The helical transmembrane segment at 581–601 (FYASGSVALYVFAYSINYLVF) threads the bilayer. The Lumenal portion of the chain corresponds to 602–613 (DLQSLSGPVSAM). Residues 614–634 (LYIGYSLLMAIAIMLATGTIG) form a helical membrane-spanning segment. Over 635 to 652 (FLTSFYFVHYLFSSVKID) the chain is Cytoplasmic. The Endoplasmic reticulum export signal motif lies at 641 to 646 (FVHYLF). Residues 650-652 (KID) carry the Golgi retention signal motif.

Belongs to the nonaspanin (TM9SF) (TC 9.A.2) family.

It localises to the endosome membrane. The protein localises to the golgi apparatus membrane. The sequence is that of Transmembrane 9 superfamily member 12 from Arabidopsis thaliana (Mouse-ear cress).